A 145-amino-acid chain; its full sequence is Photosystem I reaction center subunit XI (145 aa).

3 helical membrane passes run 48 to 68 (LEIG…LGPL), 75 to 95 (LLVG…ALTI), and 125 to 145 (IGAL…SFFA).

The protein belongs to the PsaL family.

The protein resides in the plastid. Its subcellular location is the chloroplast thylakoid membrane. The polypeptide is Photosystem I reaction center subunit XI (Isochrysis galbana (Marine planktonic alga)).